A 94-amino-acid polypeptide reads, in one-letter code: Ammonia regulation of amino acid uptake protein (94 aa).

2 consecutive repeats follow at residues His48–Gln57 and His58–Gln67.

Its function is as follows. Involved in ammonia regulation of the GAP1 permease. The chain is Ammonia regulation of amino acid uptake protein (AUA1) from Saccharomyces cerevisiae (strain ATCC 204508 / S288c) (Baker's yeast).